The primary structure comprises 521 residues: Tubulin-specific chaperone E (521 aa).

The 45-residue stretch at 24 to 68 (GPVPPTAGVWLGVEWDHPERGKHDGSHDGVRYFTCRHPTGGSFVR) folds into the CAP-Gly domain. LRR repeat units follow at residues 147–168 (FVQS…AAIT), 173–194 (SLQE…SSLS), 199–220 (HLRV…HCAP), 224–245 (QVEE…EHVL), 247–268 (ALTV…EISH), 271–292 (RLER…DVPA), and 301–322 (ALKE…NELE). In terms of domain architecture, LRRCT spans 335 to 377 (NPLLHKEKNLETARQIMIARLGQLELLDMRQILSDERRGAELD).

Belongs to the TBCE family. As to quaternary structure, supercomplex made of cofactors A to E. Cofactors A and D function by capturing and stabilizing tubulin in a quasi-native conformation. Cofactor E binds to the cofactor D-tubulin complex; interaction with cofactor C then causes the release of tubulin polypeptides that are committed to the native state.

It localises to the cytoplasm. Its subcellular location is the cytoskeleton. In terms of biological role, tubulin-folding protein; involved in the second step of the tubulin folding pathway. The chain is Tubulin-specific chaperone E (tbce) from Danio rerio (Zebrafish).